A 495-amino-acid chain; its full sequence is Glucose-6-phosphate 1-dehydrogenase (495 aa).

Residues 11–18 (GASGDLAK), Arg-45, 84–85 (DV), and Lys-147 contribute to the NADP(+) site. Residues His-177, Lys-181, Glu-215, and Asp-234 each contribute to the substrate site. The active-site Proton acceptor is His-239. Substrate contacts are provided by Lys-339 and Lys-344.

It belongs to the glucose-6-phosphate dehydrogenase family.

The enzyme catalyses D-glucose 6-phosphate + NADP(+) = 6-phospho-D-glucono-1,5-lactone + NADPH + H(+). It participates in carbohydrate degradation; pentose phosphate pathway; D-ribulose 5-phosphate from D-glucose 6-phosphate (oxidative stage): step 1/3. Functionally, catalyzes the oxidation of glucose 6-phosphate to 6-phosphogluconolactone. The polypeptide is Glucose-6-phosphate 1-dehydrogenase (Streptococcus pneumoniae serotype 4 (strain ATCC BAA-334 / TIGR4)).